The sequence spans 131 residues: Small ribosomal subunit protein uS11 (131 aa).

This sequence belongs to the universal ribosomal protein uS11 family. As to quaternary structure, part of the 30S ribosomal subunit.

In terms of biological role, located on the platform of the 30S subunit. This chain is Small ribosomal subunit protein uS11, found in Methanospirillum hungatei JF-1 (strain ATCC 27890 / DSM 864 / NBRC 100397 / JF-1).